Reading from the N-terminus, the 526-residue chain is Tyrosine 2,3-aminomutase (526 aa).

Catalysis depends on Y41, which acts as the Proton donor/acceptor. Residue H71 coordinates substrate. The 5-imidazolinone (Ala-Gly) cross-link spans 130–132; the sequence is ASG. Position 131 is a 2,3-didehydroalanine (Ser) (S131). Positions 183 and 288 each coordinate substrate.

It belongs to the TAL/TAM family. In terms of assembly, homotetramer; dimer of dimers. Post-translationally, contains an active site 4-methylidene-imidazol-5-one (MIO), which is formed autocatalytically by cyclization and dehydration of residues Ala-Ser-Gly.

It catalyses the reaction L-tyrosine = 3-amino-3-(4-hydroxyphenyl)propanoate. The enzyme catalyses L-tyrosine = (E)-4-coumarate + NH4(+). Functionally, has aminomutase and, to a much lesser extent, ammonia-lyase activity. Primarily, catalyzes the rearrangement of L-tyrosine to S-beta-tyrosine, which is probably incorporated into secondary metabolite myxovalargin. The aminomutase activity exclusively produces S-beta-tyrosine. The chain is Tyrosine 2,3-aminomutase from Myxococcus fulvus.